The sequence spans 120 residues: MKSSSELFERRRSRNRYQIRLKSAGRLRLSVFRSNKHMYAQIIDDAEGRTLVSASTVDKELRGNLTKGGDKAAAAEVGKLLAERAKAAGYTEVVFDRGGYKYHGRVQALADAAREAGLSF.

The protein belongs to the universal ribosomal protein uL18 family. Part of the 50S ribosomal subunit; part of the 5S rRNA/L5/L18/L25 subcomplex. Contacts the 5S and 23S rRNAs.

This is one of the proteins that bind and probably mediate the attachment of the 5S RNA into the large ribosomal subunit, where it forms part of the central protuberance. The polypeptide is Large ribosomal subunit protein uL18 (Rhodospirillum rubrum (strain ATCC 11170 / ATH 1.1.1 / DSM 467 / LMG 4362 / NCIMB 8255 / S1)).